Reading from the N-terminus, the 393-residue chain is Lipid-A-disaccharide synthase (393 aa).

It belongs to the LpxB family.

It carries out the reaction a lipid X + a UDP-2-N,3-O-bis[(3R)-3-hydroxyacyl]-alpha-D-glucosamine = a lipid A disaccharide + UDP + H(+). It participates in bacterial outer membrane biogenesis; LPS lipid A biosynthesis. Functionally, condensation of UDP-2,3-diacylglucosamine and 2,3-diacylglucosamine-1-phosphate to form lipid A disaccharide, a precursor of lipid A, a phosphorylated glycolipid that anchors the lipopolysaccharide to the outer membrane of the cell. This Actinobacillus pleuropneumoniae serotype 5b (strain L20) protein is Lipid-A-disaccharide synthase.